Here is a 608-residue protein sequence, read N- to C-terminus: Leucine aminopeptidase 2 (608 aa).

Substrate contacts are provided by residues 134 to 136 (QCQ) and 269 to 274 (PYGGME). Histidine 298 provides a ligand contact to Zn(2+). Residue glutamate 299 is the Proton acceptor of the active site. The Zn(2+) site is built by histidine 302 and glutamate 321. The active-site Proton donor is the tyrosine 386.

This sequence belongs to the peptidase M1 family. Zn(2+) is required as a cofactor.

The protein localises to the cytoplasm. The protein resides in the nucleus. The catalysed reaction is an epoxide + H2O = an ethanediol. Functionally, aminopeptidase that preferentially cleaves di- and tripeptides. Also has low epoxide hydrolase activity (in vitro). Can hydrolyze the epoxide leukotriene LTA(4) but it forms preferentially 5,6-dihydroxy-7,9,11,14-eicosatetraenoic acid rather than the cytokine leukotriene B(4) as the product compared to the homologous mammalian enzyme (in vitro). This is Leucine aminopeptidase 2 from Sclerotinia sclerotiorum (strain ATCC 18683 / 1980 / Ss-1) (White mold).